Reading from the N-terminus, the 246-residue chain is Ribulose-phosphate 3-epimerase (246 aa).

Ser-9 is a binding site for substrate. The a divalent metal cation site is built by His-34, Asp-36, and His-83. The Proton acceptor role is filled by Asp-36. Substrate is bound by residues His-83, Gly-159–Gly-162, Asp-188–Gly-190, and Gly-210–Ser-212. Asp-188 is an a divalent metal cation binding site. The Proton donor role is filled by Asp-188.

Belongs to the ribulose-phosphate 3-epimerase family. Co(2+) is required as a cofactor. Fe(2+) serves as cofactor. The cofactor is Mn(2+). It depends on Zn(2+) as a cofactor.

It catalyses the reaction D-ribulose 5-phosphate = D-xylulose 5-phosphate. It functions in the pathway carbohydrate degradation; pentose phosphate pathway; D-xylulose 5-phosphate from D-ribulose 5-phosphate (non-oxidative stage): step 1/1. Its function is as follows. Catalyzes the reversible epimerization of D-ribulose 5-phosphate to D-xylulose 5-phosphate. The sequence is that of Ribulose-phosphate 3-epimerase (RPE1) from Candida glabrata (strain ATCC 2001 / BCRC 20586 / JCM 3761 / NBRC 0622 / NRRL Y-65 / CBS 138) (Yeast).